We begin with the raw amino-acid sequence, 453 residues long: tRNA modification GTPase MnmE (453 aa).

3 residues coordinate (6S)-5-formyl-5,6,7,8-tetrahydrofolate: arginine 23, glutamate 80, and lysine 120. The region spanning 216–375 (GSKIVIIGKP…LIKYLKDLNC (160 aa)) is the TrmE-type G domain. Asparagine 226 provides a ligand contact to K(+). GTP contacts are provided by residues 226–231 (NSGKSS), 245–251 (TSIEGTT), and 270–273 (DTAG). Serine 230 lines the Mg(2+) pocket. Residues threonine 245, isoleucine 247, and threonine 250 each coordinate K(+). Mg(2+) is bound at residue threonine 251. Residue lysine 453 coordinates (6S)-5-formyl-5,6,7,8-tetrahydrofolate.

It belongs to the TRAFAC class TrmE-Era-EngA-EngB-Septin-like GTPase superfamily. TrmE GTPase family. As to quaternary structure, homodimer. Heterotetramer of two MnmE and two MnmG subunits. K(+) serves as cofactor.

It is found in the cytoplasm. Exhibits a very high intrinsic GTPase hydrolysis rate. Involved in the addition of a carboxymethylaminomethyl (cmnm) group at the wobble position (U34) of certain tRNAs, forming tRNA-cmnm(5)s(2)U34. In Wigglesworthia glossinidia brevipalpis, this protein is tRNA modification GTPase MnmE.